The primary structure comprises 625 residues: Somatic embryogenesis receptor kinase 1 (625 aa).

Residues 1-26 (MESSYVVFILLSLILLPNHSLWLASA) form the signal peptide. Residues 27-238 (NLEGDALHTL…STPSGYGITG (212 aa)) lie on the Extracellular side of the membrane. Cysteines 58 and 65 form a disulfide. Leucine-rich repeat receptor-like protein kinase binding stretches follow at residues 59 to 78 (TWFHVTCNNENSVIRVDLGN) and 97 to 102 (YLELYS). A brassinolide-binding site is contributed by 61-62 (FH). LRR repeat units lie at residues 92–116 (LKNLQYLELYSNNITGPIPSNLGNL), 118–140 (NLVSLDLYLNSFSGPIPESLGKL), 141–164 (SKLRFLRLNNNSLTGSIPMSLTNI), and 165–189 (TTLQVLDLSNNRLSGSVPDNGSFSL). N-linked (GlcNAc...) asparagine glycosylation is found at asparagine 104 and asparagine 115. Leucine-rich repeat receptor-like protein kinase binding regions lie at residues 123-126 (DLYL) and 145-147 (FLR). N-linked (GlcNAc...) asparagine glycans are attached at residues asparagine 150, asparagine 163, and asparagine 184. The tract at residues 171–194 (DLSNNRLSGSVPDNGSFSLFTPIS) is leucine-rich repeat receptor-like protein kinase binding. Cysteine 202 and cysteine 210 are disulfide-bonded. The chain crosses the membrane as a helical span at residues 239-259 (AIAGGVAAGAALLFAAPAIAF). The Cytoplasmic segment spans residues 260–625 (AWWRRRKPLD…LHAVELSGPR (366 aa)). Residues serine 291, serine 299, and serine 303 each carry the phosphoserine modification. Residues 302 to 589 (FSNKNILGRG…GLAEKWDEWQ (288 aa)) enclose the Protein kinase domain. ATP is bound at residue 308 to 316 (LGRGGFGKV). At threonine 325 the chain carries Phosphothreonine. ATP is bound at residue lysine 330. 2 positions are modified to phosphothreonine: threonine 337 and threonine 346. Phosphoserine occurs at positions 352, 383, 386, and 394. Threonine 402 is modified (phosphothreonine). At serine 415 the chain carries Phosphoserine. The active-site Proton acceptor is aspartate 429. Tyrosine 456 is subject to Phosphotyrosine. Residues threonine 459, threonine 462, threonine 463, and threonine 468 each carry the phosphothreonine modification. Phosphotyrosine is present on tyrosine 476. Residue serine 478 is modified to Phosphoserine. Threonine 479 is subject to Phosphothreonine. Serine 483 carries the phosphoserine modification. Position 541 is a phosphothreonine (threonine 541). Position 543 is a phosphotyrosine (tyrosine 543). Threonine 559 is subject to Phosphothreonine. Serine 606 and serine 612 each carry phosphoserine. The residue at position 613 (threonine 613) is a Phosphothreonine. At tyrosine 614 the chain carries Phosphotyrosine. At serine 622 the chain carries Phosphoserine.

This sequence belongs to the protein kinase superfamily. Ser/Thr protein kinase family. In terms of assembly, monomer, homo- and heterodimer. Interacts with KAPP, CDC48A, GRF6 or GRF7, SERK2, BRI1 and SERK3/BAK1 to form the SERK1 signaling complex. Bind to BRI1 in a brassinolide-dependent manner. Heterodimer with PSKR1. Interacts with the EF-Tu receptor EFR and FLS2 in a specific ligand-induced manner. Interacts with ERECTA in a EPF2-induced manner. Interacts with ERL1 in a EPF1-induced manner. Interacts with TMM. In the presence of the signal peptide RGF1, interacts with RGI1/RGFR4/RCH2, RGI2/RGFR3/RCH1, RGI3/RGFR1, RGI4/RGFR2/SKM2 and RGI5/RGFR5. Requires Mg(2+) as cofactor. In terms of processing, glycosylated. Important for targeting to the plasma membrane. Intermolecular autophosphorylation. The catalytic activity of SERK1 depends on the presence of a phosphorylated Thr residue in SERK1. The phosphorylation is induced by brassinosteroids. Transphosphorylation by BRI1 occurs only on Ser-299 and Thr-462. Dephosphorylation of threonine residues by the kinase-associated protein phosphatase (KAPP) is involved in SERK1 endocytosis. Expressed in flowers, tapetum, developing microspores, all cells of the embryo sac, provascular strands and developing vascular bundles. Low expression in adult vascular tissue. Detected in root meristem.

The protein localises to the cell membrane. It is found in the endoplasmic reticulum membrane. The catalysed reaction is L-seryl-[protein] + ATP = O-phospho-L-seryl-[protein] + ADP + H(+). It catalyses the reaction L-threonyl-[protein] + ATP = O-phospho-L-threonyl-[protein] + ADP + H(+). It carries out the reaction L-tyrosyl-[protein] + ATP = O-phospho-L-tyrosyl-[protein] + ADP + H(+). Its activity is regulated as follows. Inhibited by manganese. Its function is as follows. Dual specificity kinase acting on both serine/threonine- and tyrosine-containing substrates. Phosphorylates BRI1 on 'Ser-887' and CDC48 on at least one threonine residue and on 'Ser-41'. Confers embryogenic competence. Acts redundantly with SERK2 as a control point for sporophytic development controlling male gametophyte production. Involved in the brassinolide signaling pathway. Probably required during small peptide (e.g. RGF1) signaling. Involved in the perception of phytosulfokine and subsequent signal transduction. Acts as a RLK5 coreceptor and promotes high-affinity IDA sensing, thus being a positive regulator of floral abscission. This Arabidopsis thaliana (Mouse-ear cress) protein is Somatic embryogenesis receptor kinase 1.